A 129-amino-acid polypeptide reads, in one-letter code: Small ribosomal subunit protein uS11 (129 aa).

This sequence belongs to the universal ribosomal protein uS11 family. As to quaternary structure, part of the 30S ribosomal subunit.

In terms of biological role, located on the platform of the 30S subunit. The protein is Small ribosomal subunit protein uS11 of Methanocaldococcus jannaschii (strain ATCC 43067 / DSM 2661 / JAL-1 / JCM 10045 / NBRC 100440) (Methanococcus jannaschii).